A 398-amino-acid chain; its full sequence is Succinate--CoA ligase [ADP-forming] subunit beta (398 aa).

One can recognise an ATP-grasp domain in the interval 9-254 (KRLLHEYGAP…LSEEDPKEIE (246 aa)). Residues lysine 46, 53 to 55 (GRG), glutamate 109, alanine 112, and glutamate 117 contribute to the ATP site. 2 residues coordinate Mg(2+): asparagine 209 and aspartate 223. Substrate contacts are provided by residues asparagine 274 and 331–333 (GIM).

Belongs to the succinate/malate CoA ligase beta subunit family. In terms of assembly, heterotetramer of two alpha and two beta subunits. Mg(2+) is required as a cofactor.

It carries out the reaction succinate + ATP + CoA = succinyl-CoA + ADP + phosphate. The catalysed reaction is GTP + succinate + CoA = succinyl-CoA + GDP + phosphate. The protein operates within carbohydrate metabolism; tricarboxylic acid cycle; succinate from succinyl-CoA (ligase route): step 1/1. In terms of biological role, succinyl-CoA synthetase functions in the citric acid cycle (TCA), coupling the hydrolysis of succinyl-CoA to the synthesis of either ATP or GTP and thus represents the only step of substrate-level phosphorylation in the TCA. The beta subunit provides nucleotide specificity of the enzyme and binds the substrate succinate, while the binding sites for coenzyme A and phosphate are found in the alpha subunit. The chain is Succinate--CoA ligase [ADP-forming] subunit beta from Bartonella tribocorum (strain CIP 105476 / IBS 506).